The chain runs to 421 residues: Enolase 1 (421 aa).

Position 164 (Gln-164) interacts with (2R)-2-phosphoglycerate. The active-site Proton donor is Glu-206. Residues Asp-243, Glu-287, and Asp-314 each coordinate Mg(2+). (2R)-2-phosphoglycerate-binding residues include Lys-339, Arg-368, Ser-369, and Lys-390. Catalysis depends on Lys-339, which acts as the Proton acceptor.

This sequence belongs to the enolase family. Component of the RNA degradosome, a multiprotein complex involved in RNA processing and mRNA degradation. Mg(2+) is required as a cofactor.

Its subcellular location is the cytoplasm. The protein resides in the secreted. It localises to the cell surface. It catalyses the reaction (2R)-2-phosphoglycerate = phosphoenolpyruvate + H2O. Its pathway is carbohydrate degradation; glycolysis; pyruvate from D-glyceraldehyde 3-phosphate: step 4/5. Functionally, catalyzes the reversible conversion of 2-phosphoglycerate (2-PG) into phosphoenolpyruvate (PEP). It is essential for the degradation of carbohydrates via glycolysis. The polypeptide is Enolase 1 (Methylococcus capsulatus (strain ATCC 33009 / NCIMB 11132 / Bath)).